The primary structure comprises 181 residues: Adenine phosphoribosyltransferase (181 aa).

The protein belongs to the purine/pyrimidine phosphoribosyltransferase family. In terms of assembly, homodimer.

It is found in the cytoplasm. The catalysed reaction is AMP + diphosphate = 5-phospho-alpha-D-ribose 1-diphosphate + adenine. It functions in the pathway purine metabolism; AMP biosynthesis via salvage pathway; AMP from adenine: step 1/1. Functionally, catalyzes a salvage reaction resulting in the formation of AMP, that is energically less costly than de novo synthesis. The polypeptide is Adenine phosphoribosyltransferase (Methylobacterium sp. (strain 4-46)).